Here is a 382-residue protein sequence, read N- to C-terminus: Galactokinase (382 aa).

34-37 lines the substrate pocket; that stretch reads EHTD. ATP is bound at residue 124 to 130; it reads GAGLSSS. Mg(2+) contacts are provided by Ser-130 and Glu-162. Asp-174 serves as the catalytic Proton acceptor. Tyr-223 contacts substrate.

Belongs to the GHMP kinase family. GalK subfamily.

Its subcellular location is the cytoplasm. The catalysed reaction is alpha-D-galactose + ATP = alpha-D-galactose 1-phosphate + ADP + H(+). It participates in carbohydrate metabolism; galactose metabolism. Catalyzes the transfer of the gamma-phosphate of ATP to D-galactose to form alpha-D-galactose-1-phosphate (Gal-1-P). The sequence is that of Galactokinase from Salmonella heidelberg (strain SL476).